Reading from the N-terminus, the 223-residue chain is Small ribosomal subunit protein uS3 (223 aa).

A KH type-2 domain is found at 38-106; it reads LKAELKEKLK…EVYIDIQEVH (69 aa).

Belongs to the universal ribosomal protein uS3 family. As to quaternary structure, part of the 30S ribosomal subunit. Forms a tight complex with proteins S10 and S14.

In terms of biological role, binds the lower part of the 30S subunit head. Binds mRNA in the 70S ribosome, positioning it for translation. The sequence is that of Small ribosomal subunit protein uS3 from Koribacter versatilis (strain Ellin345).